We begin with the raw amino-acid sequence, 122 residues long: Large ribosomal subunit protein uL14 (122 aa).

Belongs to the universal ribosomal protein uL14 family. In terms of assembly, part of the 50S ribosomal subunit. Forms a cluster with proteins L3 and L19. In the 70S ribosome, L14 and L19 interact and together make contacts with the 16S rRNA in bridges B5 and B8.

Functionally, binds to 23S rRNA. Forms part of two intersubunit bridges in the 70S ribosome. The protein is Large ribosomal subunit protein uL14 of Spiroplasma citri.